A 272-amino-acid polypeptide reads, in one-letter code: MSSGTVLDSILDGVRADVAAREAVVDLATVKAAAKAAPKPLDVMAALREPGIAVIAEVKRASPSRGALAEISDPAELAKAYEDGGARIISVLTEGRRFNGSLDDLDSVRAAVSVPVLRKDFVISPYQIHEARAHGADLILLIVAALEQTALVSLLDRTESLGMTALVEVHTEEEADRALSAGASVIGVNARDLKTLEIDRDCFSRIAPGLPSGVIRIAESGVRGTADLLAYAGAGADAVLVGEGLVTSGDPRGAVADLVTAGTHPSCPKPAR.

Belongs to the TrpC family.

It carries out the reaction 1-(2-carboxyphenylamino)-1-deoxy-D-ribulose 5-phosphate + H(+) = (1S,2R)-1-C-(indol-3-yl)glycerol 3-phosphate + CO2 + H2O. It functions in the pathway amino-acid biosynthesis; L-tryptophan biosynthesis; L-tryptophan from chorismate: step 4/5. In Mycobacteroides abscessus (strain ATCC 19977 / DSM 44196 / CCUG 20993 / CIP 104536 / JCM 13569 / NCTC 13031 / TMC 1543 / L948) (Mycobacterium abscessus), this protein is Indole-3-glycerol phosphate synthase.